The following is a 645-amino-acid chain: Chlorophyllide a oxygenase, chloroplastic (645 aa).

A disordered region spans residues 1 to 46; sequence MLPASLQRKAAAVGGRGPTNQSRVAVRVSAQPKEAPPASTPIVEDP. Residues 105–218 are a coiled coil; it reads QARQKLEYLR…RKASDLDIKE (114 aa). The interval 258 to 287 is disordered; that stretch reads ATTVTQEVPSTSYGTPVDRAPRRSKAAIRR. Residues 259–271 are compositionally biased toward polar residues; the sequence is TTVTQEVPSTSYG. A Rieske domain is found at 305–406; sequence WYPAEFSARL…CAEKDGFIWV (102 aa). Residues Cys346, His348, Cys365, and His368 each contribute to the [2Fe-2S] cluster site. Residues Glu446, Asp450, His453, and His458 each contribute to the Fe cation site.

The protein localises to the plastid. The protein resides in the chloroplast inner membrane. It is found in the chloroplast thylakoid membrane. The catalysed reaction is chlorophyllide a + 2 NADPH + 2 O2 + 2 H(+) = chlorophyllide b + 2 NADP(+) + 3 H2O. Its function is as follows. Catalyzes a two-step oxygenase reaction involved in the synthesis of chlorophyll b. Acts specifically on the non-esterified chlorophyllide a and not on chlorophyll a. The sequence is that of Chlorophyllide a oxygenase, chloroplastic (CAO) from Chlamydomonas reinhardtii (Chlamydomonas smithii).